A 960-amino-acid polypeptide reads, in one-letter code: ATPase 4, plasma membrane-type (960 aa).

At 1 to 69 (MTTTVEDNRE…EKKESKFLKF (69 aa)) the chain is on the cytoplasmic side. The chain crosses the membrane as a helical span at residues 70–89 (LGFMWNPLSWVMEAAAIMAI). The Extracellular portion of the chain corresponds to 90 to 101 (ALANGGGKPPDW). The helical transmembrane segment at 102 to 122 (QDFVGIITLLVINSTISFIEE) threads the bilayer. Residues 123–251 (NNAGNAAAAL…GHFQQVLTAI (129 aa)) lie on the Cytoplasmic side of the membrane. Residues 252 to 272 (GNFCICSIAVGMLIEIVVMYP) traverse the membrane as a helical segment. Over 273–281 (IQHRAYRPG) the chain is Extracellular. The helical transmembrane segment at 282–299 (IDNLLVLLIGGIPIAMPT) threads the bilayer. The Cytoplasmic portion of the chain corresponds to 300–651 (VLSVTMAIGS…TSRAIFQRMK (352 aa)). Aspartate 337 serves as the catalytic 4-aspartylphosphate intermediate. Residues aspartate 596 and aspartate 600 each coordinate Mg(2+). A helical transmembrane segment spans residues 652–673 (NYTIYAVSITIRIVLGFMLLAL). Residues 674 to 678 (IWQFD) are Extracellular-facing. A helical transmembrane segment spans residues 679-701 (FPPFMVLIIAILNDGTIMTISKD). At 702–717 (RVKPSPLPDSWKLSEI) the chain is on the cytoplasmic side. A helical membrane pass occupies residues 718-738 (FATGVVFGSYMAMMTVIFFWV). Residues 739–763 (SYKTDFFPRTFGVATLEKTAHDDFR) are Extracellular-facing. Residues 764–784 (KLASAIYLQVSIISQALIFVT) traverse the membrane as a helical segment. The Cytoplasmic segment spans residues 785–796 (RSRSWSFVERPG). Residues 797–817 (IFLMIAFILAQLVATLIAVYA) form a helical membrane-spanning segment. The Extracellular segment spans residues 818-825 (NWSFAAIE). A helical transmembrane segment spans residues 826-846 (GIGWGWAGVIWLYNIIFYIPL). The Cytoplasmic segment spans residues 847-960 (DFIKFFIRYA…IETIQQAYTV (114 aa)). At threonine 893 the chain carries Phosphothreonine. Position 942 is a phosphoserine (serine 942). Residues 958–960 (YTV) are interaction with 14-3-3 proteins. Residue threonine 959 is modified to Phosphothreonine.

This sequence belongs to the cation transport ATPase (P-type) (TC 3.A.3) family. Type IIIA subfamily. In terms of assembly, binds to 14-3-3 proteins. The binding is induced by phosphorylation of Thr-959. Binding to 14-3-3 proteins activates the H(+)-ATPase. Expressed in guard cells and roots.

Its subcellular location is the cell membrane. It catalyses the reaction ATP + H2O + H(+)(in) = ADP + phosphate + 2 H(+)(out). Its function is as follows. The plasma membrane H(+) ATPase of plants and fungi generates a proton gradient that drives the active transport of nutrients by H(+)-symport. The resulting external acidification and/or internal alkinization may mediate growth responses. The protein is ATPase 4, plasma membrane-type (AHA4) of Arabidopsis thaliana (Mouse-ear cress).